We begin with the raw amino-acid sequence, 87 residues long: Guanine nucleotide-binding protein subunit gamma (87 aa).

Cys84 carries the cysteine methyl ester modification. Residue Cys84 is the site of S-geranylgeranyl cysteine attachment. A propeptide spans 85–87 (removed in mature form); the sequence is LLV.

This sequence belongs to the G protein gamma family. As to quaternary structure, g proteins are composed of 3 units, alpha, beta and gamma. The N-terminus is blocked.

It is found in the cell membrane. In terms of biological role, guanine nucleotide-binding proteins (G proteins) are involved as a modulator or transducer in various transmembrane signaling systems. This major G-protein of the squid photoreceptor is involved in visual transduction. The beta and gamma chains are required for the GTPase activity, for replacement of GDP by GTP, and for G protein-effector interaction. In Loligo forbesii (Veined squid), this protein is Guanine nucleotide-binding protein subunit gamma.